We begin with the raw amino-acid sequence, 166 residues long: Crossover junction endodeoxyribonuclease RuvC (166 aa).

Residues Asp7, Glu67, and Asp140 contribute to the active site. Asp7, Glu67, and Asp140 together coordinate Mg(2+).

It belongs to the RuvC family. As to quaternary structure, homodimer which binds Holliday junction (HJ) DNA. The HJ becomes 2-fold symmetrical on binding to RuvC with unstacked arms; it has a different conformation from HJ DNA in complex with RuvA. In the full resolvosome a probable DNA-RuvA(4)-RuvB(12)-RuvC(2) complex forms which resolves the HJ. The cofactor is Mg(2+).

Its subcellular location is the cytoplasm. The enzyme catalyses Endonucleolytic cleavage at a junction such as a reciprocal single-stranded crossover between two homologous DNA duplexes (Holliday junction).. The RuvA-RuvB-RuvC complex processes Holliday junction (HJ) DNA during genetic recombination and DNA repair. Endonuclease that resolves HJ intermediates. Cleaves cruciform DNA by making single-stranded nicks across the HJ at symmetrical positions within the homologous arms, yielding a 5'-phosphate and a 3'-hydroxyl group; requires a central core of homology in the junction. The consensus cleavage sequence is 5'-(A/T)TT(C/G)-3'. Cleavage occurs on the 3'-side of the TT dinucleotide at the point of strand exchange. HJ branch migration catalyzed by RuvA-RuvB allows RuvC to scan DNA until it finds its consensus sequence, where it cleaves and resolves the cruciform DNA. In Brevibacillus brevis (strain 47 / JCM 6285 / NBRC 100599), this protein is Crossover junction endodeoxyribonuclease RuvC.